Here is a 155-residue protein sequence, read N- to C-terminus: 6,7-dimethyl-8-ribityllumazine synthase (155 aa).

Residues Phe22, 57-59 (AVE), and 81-83 (TVI) contribute to the 5-amino-6-(D-ribitylamino)uracil site. 86 to 87 (GT) contacts (2S)-2-hydroxy-3-oxobutyl phosphate. His89 functions as the Proton donor in the catalytic mechanism. Position 114 (Phe114) interacts with 5-amino-6-(D-ribitylamino)uracil. Residue Arg128 participates in (2S)-2-hydroxy-3-oxobutyl phosphate binding.

This sequence belongs to the DMRL synthase family. Forms an icosahedral capsid composed of 60 subunits, arranged as a dodecamer of pentamers.

The catalysed reaction is (2S)-2-hydroxy-3-oxobutyl phosphate + 5-amino-6-(D-ribitylamino)uracil = 6,7-dimethyl-8-(1-D-ribityl)lumazine + phosphate + 2 H2O + H(+). It participates in cofactor biosynthesis; riboflavin biosynthesis; riboflavin from 2-hydroxy-3-oxobutyl phosphate and 5-amino-6-(D-ribitylamino)uracil: step 1/2. Functionally, catalyzes the formation of 6,7-dimethyl-8-ribityllumazine by condensation of 5-amino-6-(D-ribitylamino)uracil with 3,4-dihydroxy-2-butanone 4-phosphate. This is the penultimate step in the biosynthesis of riboflavin. The chain is 6,7-dimethyl-8-ribityllumazine synthase from Psychromonas ingrahamii (strain DSM 17664 / CCUG 51855 / 37).